The chain runs to 111 residues: Entry-fusion complex protein OPG086 (111 aa).

The helical; Signal-anchor transmembrane segment at 1–21 (MASLLYLILFLLFVCISYYFT) threads the bilayer. The Virion surface segment spans residues 22-111 (YYPTNKLQAA…TLLPILLLSK (90 aa)).

This sequence belongs to the orthopoxvirus OPG086 family. In terms of assembly, interacts with OPG099/L5. Component of the entry fusion complex (EFC) composed of OPG053, OPG076, OPG086, OPG094, OPG095, OPG099, OPG107, OPG143, OPG104, OPG147 and OPG155. Except for OPG095 and OPG053, each of the EFC proteins is required for assembly or stability of the complex. Post-translationally, unglycosylated because produced in viral factories instead of the classic ER -Golgi route.

The protein resides in the virion membrane. Functionally, component of the entry fusion complex (EFC), which consists of 11 proteins. During cell infection, this complex mediates entry of the virion core into the host cytoplasm by a two-step mechanism consisting of lipid mixing of the viral and cellular membranes and subsequent pore formation. The chain is Entry-fusion complex protein OPG086 (OPG086) from Vaccinia virus (strain Copenhagen) (VACV).